The primary structure comprises 73 residues: Translation initiation factor IF-1 2 (73 aa).

The S1-like domain maps to 1–72 (MAKEELVEFG…TKGRINYRHK (72 aa)).

The protein belongs to the IF-1 family. Component of the 30S ribosomal translation pre-initiation complex which assembles on the 30S ribosome in the order IF-2 and IF-3, IF-1 and N-formylmethionyl-tRNA(fMet); mRNA recruitment can occur at any time during PIC assembly.

It is found in the cytoplasm. In terms of biological role, one of the essential components for the initiation of protein synthesis. Stabilizes the binding of IF-2 and IF-3 on the 30S subunit to which N-formylmethionyl-tRNA(fMet) subsequently binds. Helps modulate mRNA selection, yielding the 30S pre-initiation complex (PIC). Upon addition of the 50S ribosomal subunit IF-1, IF-2 and IF-3 are released leaving the mature 70S translation initiation complex. The polypeptide is Translation initiation factor IF-1 2 (Cupriavidus pinatubonensis (strain JMP 134 / LMG 1197) (Cupriavidus necator (strain JMP 134))).